An 88-amino-acid chain; its full sequence is MSRSIKKGVFLHKSLFLKIKNNKLENIKTWSRNSTIIPDMIGININIHNGKLFKKVFIVEDMIGCKLGEFSFTRKFKSHSKKIKRKKK.

The protein belongs to the universal ribosomal protein uS19 family.

Its function is as follows. Protein S19 forms a complex with S13 that binds strongly to the 16S ribosomal RNA. This chain is Small ribosomal subunit protein uS19, found in Carsonella ruddii (strain PV).